Consider the following 1076-residue polypeptide: Protein EXPORTIN 1B (1076 aa).

Residues 37–103 (ADNILRDLKA…KNYISDVIVQ (67 aa)) form the Importin N-terminal domain. HEAT repeat units follow at residues 135-171 (AKWKSFIPDLVIAAKTSETICENCMAILKLLSEEVFD), 232-267 (IFESPLLEILLKFFPVPAYRNLTLQCLSEVASLNFG), 282-319 (MNQLQAILPLNLNIPEAYSTGSSEEQAFIQNLALFFTS), 475-514 (DTEKQMLSKLSKQLSGEEWAWNNLNTLCWAIGSISGSMVV), 564-601 (KFLKTVVHKLFEFMHETHPGVQDMACDTFLKIVQKCKR), 613-650 (PFVSELLSGLATIVGDLQPHQIHTFYESVGSMIQAESD), 683-720 (LKEPDVIRTVLNILQTNTRVATSLGTFFLSQISLIFLD), 757-794 (REILKLIETFLDKAENQPHIGKQFVPPMMDQVLGDYAR), 799-836 (ARESEVLSLFATIINKYKVVMRDEVPLIFEAVFQCTLE), 895-935 (ETGL…VLTD), and 943-988 (KLHV…YTTK).

It belongs to the exportin family. Present in mature pollen grains, unpollinated pistils, and 2-week-old seedlings.

Its subcellular location is the nucleus. The protein localises to the nuclear pore complex. It is found in the nucleus membrane. Its function is as follows. Receptor for the leucine-rich nuclear export signal (NES). Binds cooperatively to the NES on its target protein and to the small GTPase Ran in its active GTP-bound form. Required for the maternal-to-embryonic transition and during gametophyte development. The chain is Protein EXPORTIN 1B from Arabidopsis thaliana (Mouse-ear cress).